The sequence spans 397 residues: Class V chitinase CHIT5 (397 aa).

Residues 1 to 18 (MIIKLLVALIHYLHETMA) form the signal peptide. Residues 54–397 (GVRAAYWPAW…SKQASNAWGY (344 aa)) enclose the GH18 domain. Residues Asn128 and Asn147 are each glycosylated (N-linked (GlcNAc...) asparagine). Glu166 serves as the catalytic Proton donor. Residues Asn193, Asn209, Asn247, and Asn261 are each glycosylated (N-linked (GlcNAc...) asparagine).

It belongs to the glycosyl hydrolase 18 family. Chitinase class V subfamily.

It carries out the reaction Random endo-hydrolysis of N-acetyl-beta-D-glucosaminide (1-&gt;4)-beta-linkages in chitin and chitodextrins.. It functions in the pathway glycan degradation; chitin degradation. Functionally, possesses chitinase activity in vitro toward glycol chitin, carboxymethyl-chitin, colloidal chitin, and the chitin oligosaccharides (N-acetylglucosamine) (GlcNAc)6 and (GlcNAc)5. Hydrolyzes (GlcNAc)6 into (GlcNAc)4 and (GlcNAc)2, or two (GlcNAc)3 molecules. Has the capacity to inhibit hyphal growth of the fungus Trichoderma viride in an agar-plate bioassay. Involved in symbiotic signaling. Required for root hair infection threads (ITs) elongation and nodule development. Possesses Nod factor (NF) hydrolase activity. NFs are lipo-chitooligosaccharide signaling molecules produced by nitrogen-fixing rhizobia to initiate nodulation (symbiosis) on the roots of legumes. Modulates NF levels and signaling to complete transition of infected nodules to functional nitrogen-fixing organs. The sequence is that of Class V chitinase CHIT5 from Lotus japonicus (Lotus corniculatus var. japonicus).